We begin with the raw amino-acid sequence, 198 residues long: Na(+)-translocating NADH-quinone reductase subunit E (198 aa).

Transmembrane regions (helical) follow at residues 11 to 31 (SIFIENMALSFFLGMCTFLAV), 39 to 59 (FGLGVAVVVVLTLAVPLNNLV), 77 to 97 (FLNFITFIGVIAALVQILEMV), 110 to 130 (GIFLPLITVNCAIFGGVSFMV), 140 to 160 (IVYGFGSGVGWMLAIVALAGI), and 176 to 196 (LGITFITVGLMALGFMSFSGV).

Belongs to the NqrDE/RnfAE family. As to quaternary structure, composed of six subunits; NqrA, NqrB, NqrC, NqrD, NqrE and NqrF.

It localises to the cell inner membrane. The enzyme catalyses a ubiquinone + n Na(+)(in) + NADH + H(+) = a ubiquinol + n Na(+)(out) + NAD(+). In terms of biological role, NQR complex catalyzes the reduction of ubiquinone-1 to ubiquinol by two successive reactions, coupled with the transport of Na(+) ions from the cytoplasm to the periplasm. NqrA to NqrE are probably involved in the second step, the conversion of ubisemiquinone to ubiquinol. In Aliivibrio salmonicida (strain LFI1238) (Vibrio salmonicida (strain LFI1238)), this protein is Na(+)-translocating NADH-quinone reductase subunit E.